The following is a 687-amino-acid chain: Adhesion G-protein coupled receptor G1 (687 aa).

An N-terminal signal peptide occupies residues 1–25; that stretch reads MTAQSLLQTTLFLLSLLFLVQGAHG. 26 to 33 provides a ligand contact to heparin; it reads RGHREDFR. Residues 26 to 402 are Extracellular-facing; sequence RGHREDFRFC…VEVDAVHKHY (377 aa). Cystine bridges form between Cys-35–Cys-91 and Cys-121–Cys-177. Residues Asn-39, Asn-148, and Asn-171 are each glycosylated (N-linked (GlcNAc...) asparagine). 190 to 200 contributes to the heparin binding site; it reads LKHPQKASRRP. The GAIN-B domain maps to 224–395; that stretch reads DTVSFEEDRI…AVLMVSSVEV (172 aa). N-linked (GlcNAc...) asparagine glycosylation is found at Asn-234, Asn-303, Asn-324, and Asn-341. 2 disulfides stabilise this stretch: Cys-346–Cys-377 and Cys-366–Cys-379. The tract at residues 346–395 is GPS; the sequence is CVFWVEDPTLSSPGHWSSAGCETVRRETQTSCLCNHLTYFAVLMVSSVEV. The tract at residues 384-397 is stachel; the sequence is YFAVLMVSSVEVDA. Residues 403-423 form a helical membrane-spanning segment; sequence LSLLSYVGCVVSALACVVTIA. Topologically, residues 424 to 442 are cytoplasmic; the sequence is AYLCSRRKPRDYTIKVHMN. A helical membrane pass occupies residues 443 to 463; it reads LLLAVFLLDTSFLLSEPVALT. Residues 464-470 lie on the Extracellular side of the membrane; it reads GSEAGCR. Residues 471-491 traverse the membrane as a helical segment; sequence ASAIFLHFSLLACLSWMGLEG. Topologically, residues 492-512 are cytoplasmic; sequence YNLYRLVVEVFGTYVPGYLLK. A helical membrane pass occupies residues 513-533; sequence LSAMGWGFPIFLVTLVALVDV. Residues 534-570 are Extracellular-facing; the sequence is DNYGPIILAVHRTPEGVIYPSMCWIRDSLVSYITNLG. A helical membrane pass occupies residues 571-591; the sequence is LFSLVFLFNMAMLATMVVQIL. The Cytoplasmic segment spans residues 592–603; sequence RLRPHTQKWSHV. The chain crosses the membrane as a helical span at residues 604–624; the sequence is LTLLGLSLVLGLPWALIFFSF. At 625-630 the chain is on the extracellular side; the sequence is ASGTFQ. A helical membrane pass occupies residues 631–651; that stretch reads LVILYLFSIITSFQGFLIFIW. The Cytoplasmic portion of the chain corresponds to 652-687; it reads YWSMRLQARGGPSPLKSNSDSARLPISSGSTSSSRI. Positions 664-687 are disordered; that stretch reads SPLKSNSDSARLPISSGSTSSSRI. Low complexity predominate over residues 678 to 687; that stretch reads SSGSTSSSRI.

It belongs to the G-protein coupled receptor 2 family. LN-TM7 subfamily. As to quaternary structure, heterodimer of 2 chains generated by proteolytic processing; the large extracellular N-terminal fragment (ADGRG1 NT) and the membrane-bound C-terminal fragment (ADGRG1-CT) predominantly remain associated and non-covalently linked. ADGRG1 NT self-associates in a trans-trans manner; the homophilic interaction enhances receptor signaling. Interacts with TGM2. Interacts with heparin; leading to the reduction of ADGRG1 shedding. Interacts with COL3A1. Part of a GPCR-tetraspanin complex at least consisting of ADGRG1, CD81, eventually CD9, and GNA11 in which CD81 is enhancing the association of ADGRG1 with GNA11. Post-translationally, autoproteolytically cleaved into 2 fragments; the large extracellular N-terminal fragment (ADGRG1 NT) and the membrane-bound C-terminal fragment (ADGRG1 CT) predominantly remain associated and non-covalently linked. Shedding to yield the secreted ADGRG1 N-terminal fragment seems to involve metalloprotease(s). Ubiquitinated. Undergoes polyubiquitination upon activation.

It localises to the cell membrane. Its subcellular location is the secreted. It is found in the membrane raft. Forms a heterodimer of 2 chains generated by proteolytic processing that remain associated through non-covalent interactions mediated by the GAIN-B domain. In the inactivated receptor, the Stachel sequence (also named stalk) is embedded in the GAIN-B domain, where it adopts a beta-strand conformation. On activation, the Stachel moves into the 7 transmembrane region and adopts a twisted hook-shaped configuration that forms contacts within the receptor, leading to coupling of a G-alpha protein, which activates signaling. The cleaved GAIN-B and N-terminal domains can then dissociate from the rest of the receptor. In terms of biological role, adhesion G-protein coupled receptor (aGPCR) for steroid hormone 17alpha-hydroxypregnenolone (17-OH), which is involved in cell adhesion and cell-cell interactions. Ligand binding causes a conformation change that triggers signaling via guanine nucleotide-binding proteins (G proteins) and modulates the activity of downstream effectors, such as RhoA pathway. ADGRG1 is coupled to G(12) and/or G(13) G proteins (GNA12 and GNA13, respectively) and mediates the activation Rho small GTPases. Acts as a potent suppressor of ferroptosis: binding to 17-OH-binding initiates signaling that down-regulates CD36 and alleviates ferroptosis-induced liver injury. Ligand-binding also induces cell adhesion activity via association with proteins such as collagen III/COL3A1 and TGM2. Mediates cell matrix adhesion in developing neurons and hematopoietic stem cells. Involved in cortical development, specifically in maintenance of the pial basement membrane integrity and in cortical lamination: association with COL3A1 in the developing brain inhibits neuronal migration via activation of the RhoA pathway. Together with TGM2, acts as a regulator of myelination and myelin repair in oligodendrocyte precursor cells. Acts as a hemostatic sensor of shear force: G protein-coupled receptor signaling is activated in response to shear force in platelets, promoting G(13) G protein signaling, and platelet shape change and aggregation in a COL3A1-dependent manner. Acts as an inhibitor of VEGFA production thereby inhibiting angiogenesis through a signaling pathway mediated by PRKCA. Plays a role in the maintenance of hematopoietic stem cells in bone marrow niche. Plays an essential role in testis development. This is Adhesion G-protein coupled receptor G1 (ADGRG1) from Pan troglodytes (Chimpanzee).